We begin with the raw amino-acid sequence, 335 residues long: Anthranilate phosphoribosyltransferase (335 aa).

5-phospho-alpha-D-ribose 1-diphosphate is bound by residues G79, 82-83, T87, 89-92, 107-115, and S119; these read GD, NVST, and KHGSRSVSS. G79 contributes to the anthranilate binding site. S91 serves as a coordination point for Mg(2+). R165 is a binding site for anthranilate. Mg(2+) is bound by residues D223 and E224.

This sequence belongs to the anthranilate phosphoribosyltransferase family. In terms of assembly, homodimer. Mg(2+) is required as a cofactor.

It carries out the reaction N-(5-phospho-beta-D-ribosyl)anthranilate + diphosphate = 5-phospho-alpha-D-ribose 1-diphosphate + anthranilate. It functions in the pathway amino-acid biosynthesis; L-tryptophan biosynthesis; L-tryptophan from chorismate: step 2/5. Its function is as follows. Catalyzes the transfer of the phosphoribosyl group of 5-phosphorylribose-1-pyrophosphate (PRPP) to anthranilate to yield N-(5'-phosphoribosyl)-anthranilate (PRA). The protein is Anthranilate phosphoribosyltransferase of Helicobacter pylori (strain HPAG1).